Reading from the N-terminus, the 956-residue chain is F-box only protein 10 (956 aa).

An F-box domain is found at 1 to 48 (MEAGGLPLELWRMILAYLHLPDLGRCSLVCRAWYELILSLDSTRWRQL). 2 PbH1 repeats span residues 198–217 (SGHV…QVHG) and 238–260 (VPLC…TVEG). Residues 314 to 367 (EGSQSPTSPASSSPKPGSKAGSQEAEVGSDGERVAQTPDSSDGGLSPSGEDEDE) are disordered. Low complexity-rich tracts occupy residues 316-336 (SQSP…AGSQ) and 351-361 (PDSSDGGLSPS). Residues Ser321 and Ser326 each carry the phosphoserine modification. PbH1 repeat units lie at residues 427 to 448 (VQGC…FVCS), 449 to 470 (HGRA…RCIH), 471 to 493 (NSKI…FLRL), 494 to 516 (EGGG…DIRK), 538 to 560 (LGNG…GIYI), 561 to 583 (LYHG…GIAV), 584 to 606 (NENG…GVDI), 607 to 629 (RRGG…GVVV), 630 to 652 (GDEG…GVWM), 653 to 675 (MSSS…GVAV), 717 to 739 (RPIT…GLYV), 740 to 762 (QSSE…GITV), 764 to 786 (QSSQ…GVKV), 787 to 809 (EAQC…GIIT), and 832 to 854 (LPRS…GIAV).

In terms of assembly, component of the SCF(FBXO10) complex consisting of CUL1, SKP1 and FBXO10. Interacts with BCL2. Interacts with PRDM1.

The protein resides in the cytoplasm. Its pathway is protein modification; protein ubiquitination. Substrate-recognition component of the SCF (SKP1-CUL1-F-box protein)-type E3 ubiquitin ligase complex. Mediates the ubiquitination and degradation of BCL2, an antiapoptotic protein, thereby playing a role in apoptosis by controlling the stability of BCL2. Targets also the receptor for advanced glycation end products RAGE for ubiquitination and subsequent lysosomal degradation. Directly controls HGAL/GCSAM ubiquitination and degradation and thereby decreases BCR signaling. In Homo sapiens (Human), this protein is F-box only protein 10 (FBXO10).